The primary structure comprises 153 residues: UPF0251 protein CT0950 (153 aa).

The protein belongs to the UPF0251 family.

The protein is UPF0251 protein CT0950 of Chlorobaculum tepidum (strain ATCC 49652 / DSM 12025 / NBRC 103806 / TLS) (Chlorobium tepidum).